Here is a 345-residue protein sequence, read N- to C-terminus: uncharacterized protein (345 aa).

2 disordered regions span residues 1–58 (MPSP…WRGD) and 139–165 (KTNS…NSPK). Residues 27 to 39 (IKGEGSDDGKEKS) are compositionally biased toward basic and acidic residues. Residues 154 to 165 (KQGSAESKNSPK) show a composition bias toward polar residues.

It belongs to the MG307/MG309/MG338 family.

This is an uncharacterized protein from Mycoplasma pneumoniae (strain ATCC 29342 / M129 / Subtype 1) (Mycoplasmoides pneumoniae).